Consider the following 570-residue polypeptide: PTS system lactose-specific EIICB component (570 aa).

The region spanning 9-410 is the PTS EIIC type-3 domain; the sequence is IEKGKPFFEK…VVDIIIYYPF (402 aa). 9 helical membrane passes run 31 to 51, 65 to 85, 104 to 124, 133 to 153, 178 to 198, 223 to 243, 283 to 303, 340 to 360, and 382 to 402; these read GFISAMPVILFSSIFLLIAYV, AILMKPYNYTMGLVAFLVAGT, INFISTMLAAMCGFLFLASDP, AFMGTKGLLTAFLSAFVTVIV, FKDLIPFSAVIIILYALDLVI, GWIGVTIIFGAFALFWFVGIH, MFIVTFGGTGATLVVPFMFMW, VFFIPFVLAPIVNVWIFKLFV, and IIMGTGFGLWSFVLAITLIVV. The 104-residue stretch at 467 to 570 folds into the PTS EIIB type-3 domain; sequence QTNVLVLCAG…LDFVQQQFEN (104 aa). The active-site Phosphocysteine intermediate; for EIIB activity is the Cys-474. Position 474 is a phosphocysteine; by EIIA (Cys-474).

It is found in the cell membrane. It catalyses the reaction lactose(out) + N(pros)-phospho-L-histidyl-[protein] = lactose 6-phosphate(in) + L-histidyl-[protein]. The phosphoenolpyruvate-dependent sugar phosphotransferase system (sugar PTS), a major carbohydrate active transport system, catalyzes the phosphorylation of incoming sugar substrates concomitantly with their translocation across the cell membrane. The enzyme II LacEF PTS system is involved in lactose transport. This chain is PTS system lactose-specific EIICB component, found in Staphylococcus aureus (strain MSSA476).